A 326-amino-acid chain; its full sequence is Target of rapamycin complex subunit lst8 (326 aa).

WD repeat units lie at residues 1-37 (MNSN…CTRT), 40-80 (HQDS…PVIN), 83-122 (GVSK…LQCQ), 126-165 (QVNA…NEQL), 168-207 (ETDV…GEDL), 218-257 (AHKR…LMTE), and 268-309 (TSRG…REYS).

It belongs to the WD repeat LST8 family. As to quaternary structure, part of the mechanistic target of rapamycin complex 1 (mTORC1) which contains MTOR, MLST8 and RPTOR. Component of the mechanistic target of rapamycin complex 2 (mTORC2), consisting in two heterotretramers composed of MTOR, MLST8, RICTOR and MAPKAP1/SIN1.

Its subcellular location is the lysosome membrane. It localises to the cytoplasm. Its function is as follows. Subunit of both mTORC1 and mTORC2, which regulates cell growth and survival in response to nutrient and hormonal signals. mTORC1 is activated in response to growth factors or amino acids. In response to nutrients, mTORC1 is recruited to the lysosome membrane and promotes protein, lipid and nucleotide synthesis by phosphorylating several substrates, such as ribosomal protein S6 kinase (RPS6KB1 and RPS6KB2) and EIF4EBP1 (4E-BP1). In the same time, it inhibits catabolic pathways by phosphorylating the autophagy initiation components ULK1 and ATG13, as well as transcription factor TFEB, a master regulators of lysosomal biogenesis and autophagy. The mTORC1 complex is inhibited in response to starvation and amino acid depletion. Within mTORC1, MLST8 interacts directly with MTOR and enhances its kinase activity. In nutrient-poor conditions, stabilizes the MTOR-RPTOR interaction and favors RPTOR-mediated inhibition of MTOR activity. As part of the mTORC2 complex, transduces signals from growth factors to pathways involved in proliferation, cytoskeletal organization, lipogenesis and anabolic output. mTORC2 is also activated by growth factors, but seems to be nutrient-insensitive. In response to growth factors, mTORC2 phosphorylates and activates AGC protein kinase family members, including AKT (AKT1, AKT2 and AKT3), PKC (PRKCA, PRKCB and PRKCE) and SGK1. mTORC2 functions upstream of Rho GTPases to regulate the actin cytoskeleton, probably by activating one or more Rho-type guanine nucleotide exchange factors. mTORC2 promotes the serum-induced formation of stress-fibers or F-actin. Within mTORC2, MLST8 acts as a bridge between MAPKAP1/SIN1 and MTOR. In Xenopus tropicalis (Western clawed frog), this protein is Target of rapamycin complex subunit lst8 (mlst8).